A 447-amino-acid chain; its full sequence is MSGSEPPSGDSGGAGGYAVFYPAGYQALNPEEHGLDRGFRLTAFSDMKGUGCKVPQETLLKLLQGLEPDRPPGEDGGLGTGVGDETADFGLVSAAQGPRLGIGMDSCVIPLRHGGLSLVQTTDFFYPLVEDPYMMGRIACANVLSDLYAMGITECDNMLMLLSVSQKMNEKERDLVLPLMMKGFRDAAEEGGTSVTGGQTVINPWIIIGGVASVVCQPNDFILPDGAVPGDVLVLTKPLGTQVAVNAHQWLDIPEKWNKIKLVISREEVEQAYQEAMLNMATLNRTAAALMHKFNAHAATDITGFGIIGHARNLAKQQKNDVAFVIHNLPIISKMAAISKAGGNLFGLLQGTSSETSGGLLICLPREQAARFCAEMKSSRMGLLGAGQDGGVGDGQQAWIIGIVEKGNRCARIIDKPRIIEVPYRGSVVSVQEGSNNNASPPEVQLA.

The active site involves U50. U50 is a non-standard amino acid (selenocysteine). Residues K53, G103 to D105, D123, D146, and G197 to T200 each bind ATP. Position 105 (D105) interacts with Mg(2+). Position 146 (D146) interacts with Mg(2+). Residue D301 coordinates Mg(2+).

This sequence belongs to the selenophosphate synthase 1 family. Homodimer. Requires Mg(2+) as cofactor. In the embryo, expressed in retina, olfactory vesicles, tectum, pronephros ducts and myotomes at 24 hours post-fertilization and in retina, tectum, liver and intestinal bulb 3 days after fertilization.

It carries out the reaction hydrogenselenide + ATP + H2O = selenophosphate + AMP + phosphate + 2 H(+). Synthesizes selenophosphate from selenide and ATP. The protein is Selenide, water dikinase 3 of Danio rerio (Zebrafish).